We begin with the raw amino-acid sequence, 81 residues long: U17-lycotoxin-Ls1a (81 aa).

Residues 1–22 (MSSKVQAVLLLVGVITFLAVHA) form the signal peptide. The propeptide occupies 23–34 (QEELSENTESER). 3 disulfides stabilise this stretch: Cys36/Cys51, Cys50/Cys67, and Cys58/Cys65.

This sequence belongs to the neurotoxin 02 (plectoxin) family. In terms of tissue distribution, expressed by the venom gland.

The protein localises to the secreted. This chain is U17-lycotoxin-Ls1a, found in Lycosa singoriensis (Wolf spider).